We begin with the raw amino-acid sequence, 374 residues long: C-X-C chemokine receptor type 5 (374 aa).

Residues 1–57 (MNYPLTLDMGSITYNMDDLYKELAFYSNSTEIPLQDSNFCSTVEGPLLTSFKAVFMP) lie on the Extracellular side of the membrane. Asn28 carries an N-linked (GlcNAc...) asparagine glycan. Residues 58-78 (VAYSLIFLLGMMGNILVLVIL) form a helical membrane-spanning segment. At 79 to 90 (ERHRHTRSSTET) the chain is on the cytoplasmic side. A helical membrane pass occupies residues 91 to 111 (FLFHLAVADLLLVFILPFAVA). Over 112 to 126 (EGSVGWVLGTFLCKT) the chain is Extracellular. The cysteines at positions 124 and 204 are disulfide-linked. The helical transmembrane segment at 127–147 (VIALHKINFYCSSLLLACIAV) threads the bilayer. Over 148-169 (DRYLAIVHAVHAYRRRRLLSIH) the chain is Cytoplasmic. The helical transmembrane segment at 170 to 190 (ITCTAIWLAGFLFALPELLFA) threads the bilayer. The Extracellular segment spans residues 191–221 (KVGQPHNNDSLPQCTFSQENEAETRAWFTSR). The N-linked (GlcNAc...) asparagine glycan is linked to Asn198. A helical membrane pass occupies residues 222–242 (FLYHIGGFLLPMLVMGWCYVG). Residues 243-261 (VVHRLLQAQRRPQRQKAVR) are Cytoplasmic-facing. The helical transmembrane segment at 262–282 (VAILVTSIFFLCWSPYHIVIF) threads the bilayer. Topologically, residues 283–306 (LDTLERLKAVNSSCELSGYLSVAI) are extracellular. The helical transmembrane segment at 307–327 (TLCEFLGLAHCCLNPMLYTFA) threads the bilayer. The Cytoplasmic segment spans residues 328–374 (GVKFRSDLSRLLTKLGCAGPASLCQLFPNWRKSSLSESENATSLTTF).

This sequence belongs to the G-protein coupled receptor 1 family. Mainly in spleen, in resting B-cells.

The protein localises to the cell membrane. In terms of biological role, cytokine receptor that binds to B-lymphocyte chemoattractant (BLC). Involved in B-cell migration into B-cell follicles of spleen and Peyer patches but not into those of mesenteric or peripheral lymph nodes. The chain is C-X-C chemokine receptor type 5 (Cxcr5) from Mus musculus (Mouse).